Here is a 491-residue protein sequence, read N- to C-terminus: Glutamyl-tRNA(Gln) amidotransferase subunit A (491 aa).

Catalysis depends on charge relay system residues Lys-80 and Ser-155. The active-site Acyl-ester intermediate is Ser-179.

This sequence belongs to the amidase family. GatA subfamily. In terms of assembly, heterotrimer of A, B and C subunits.

The catalysed reaction is L-glutamyl-tRNA(Gln) + L-glutamine + ATP + H2O = L-glutaminyl-tRNA(Gln) + L-glutamate + ADP + phosphate + H(+). Functionally, allows the formation of correctly charged Gln-tRNA(Gln) through the transamidation of misacylated Glu-tRNA(Gln) in organisms which lack glutaminyl-tRNA synthetase. The reaction takes place in the presence of glutamine and ATP through an activated gamma-phospho-Glu-tRNA(Gln). The chain is Glutamyl-tRNA(Gln) amidotransferase subunit A from Salinispora arenicola (strain CNS-205).